Here is a 657-residue protein sequence, read N- to C-terminus: Pentatricopeptide repeat-containing protein CRR2, chloroplastic (657 aa).

Residues 1–51 (MFLSHPPQVIQPTYHTVNFLPRSPLKPPSCSVALNNPSISSGAGAKISNNQ) constitute a chloroplast transit peptide. 12 PPR repeats span residues 45 to 75 (AKIS…ESSP), 76 to 110 (SQQT…GSDQ), 111 to 141 (DPFL…TRKR), 142 to 176 (TIYV…GVES), 177 to 215 (DRFT…GYSS), 216 to 246 (HVYI…MPVR), 247 to 277 (NVVS…MMRE), 284 to 318 (NSVT…GLDS), 319 to 349 (ILPV…MHDR), 350 to 384 (DVVS…GASP), 385 to 420 (TPVT…GIKP), and 421 to 451 (QIEH…MRTE). The interval 456-531 (VWGSLLGSCR…LPGRCWMEVR (76 aa)) is type E motif. Residues 532 to 562 (RKMYSFVSVDEFNPLMEQIHAFLVKLAEDMK) are type E(+) motif. The tract at residues 563 to 657 (EKGYIPQTKG…NGVCSCGDYW (95 aa)) is type DYW motif.

The protein belongs to the PPR family. PCMP-H subfamily.

Its subcellular location is the plastid. The protein resides in the chloroplast. Functionally, required for the intergenic processing between chloroplast rsp7 and ndhB transcripts. Necessary for chloroplast NADH dehydrogenase-like (NDH) complex-dependent cyclic electron transport around PSI (CET). This chain is Pentatricopeptide repeat-containing protein CRR2, chloroplastic, found in Arabidopsis thaliana (Mouse-ear cress).